The sequence spans 478 residues: Ninja-family protein 7 (478 aa).

Disordered stretches follow at residues 1 to 247, 336 to 374, and 454 to 478; these read MDDD…LTPG, SFTAKDKADQTGTKQVDDGKKPREAGASSSAHAEDEKKA, and DAPAQDNSATLPAFPAGNQATSAEN. Residues 23 to 35 are compositionally biased toward basic and acidic residues; it reads KARDAPLEPKAEP. Residues 169–179 are compositionally biased toward polar residues; that stretch reads ISISTDDGSTG. Residues 180–189 are compositionally biased toward acidic residues; the sequence is ENEDVAESEA. Over residues 233-242 the composition is skewed to low complexity; it reads SFSGSESSSG. Residues 339-359 show a composition bias toward basic and acidic residues; that stretch reads AKDKADQTGTKQVDDGKKPRE.

The protein belongs to the Ninja family.

The protein localises to the nucleus. The protein is Ninja-family protein 7 of Zea mays (Maize).